Consider the following 61-residue polypeptide: Potassium channel toxin alpha-KTx 18.1 (61 aa).

An N-terminal signal peptide occupies residues 1–24 (MRFTGIILILISMTLIDSFFEMKV). 3 cysteine pairs are disulfide-bonded: C33–C52, C38–C57, and C42–C59.

In terms of tissue distribution, expressed by the venom gland.

It localises to the secreted. Reversible blocker of both Kv1.3/KCNA3 potassium channels (high affinity) and Shaker B (mammalian Kv1.1 analog) potassium channels (very low affinity). This Tityus obscurus (Amazonian scorpion) protein is Potassium channel toxin alpha-KTx 18.1.